The sequence spans 150 residues: Leukotriene C4 synthase (150 aa).

Residues 1 to 6 (MKDEVA) are Cytoplasmic-facing. The helical transmembrane segment at 7–27 (LLATVTLVGVLLQAYFSLQVI) threads the bilayer. Over 28–48 (SARRAFHVSPPLTSGPPEFER) the chain is Lumenal. Residue arginine 30 coordinates glutathione. The active-site Proton donor is arginine 31. Phosphoserine is present on serine 36. The chain crosses the membrane as a helical span at residues 49–69 (VFRAQVNCSEYFPLFLATLWV). Residues 51 to 55 (RAQVN), glutamine 53, and 58 to 59 (EY) contribute to the glutathione site. The Cytoplasmic segment spans residues 70-73 (AGIF). Residues 74–94 (FHEGAAALCGLFYLFARLRYF) form a helical membrane-spanning segment. 93–97 (YFQGY) contacts glutathione. Topologically, residues 95-104 (QGYARSAQLR) are lumenal. The Proton acceptor role is filled by arginine 104. A helical membrane pass occupies residues 105–124 (LTPLYASARALWLLVAMAAL). Over 125-150 (GLLVHFLPGTLRTALFRWLQMLLPMA) the chain is Cytoplasmic.

The protein belongs to the MAPEG family. Homotrimer. Interacts with ALOX5AP and ALOX5. In terms of processing, phosphorylation at Ser-36 by RPS6KB1 inhibits the leukotriene-C4 synthase activity. In terms of tissue distribution, widely expressed.

It is found in the nucleus outer membrane. Its subcellular location is the endoplasmic reticulum membrane. The protein resides in the nucleus membrane. The catalysed reaction is leukotriene C4 = leukotriene A4 + glutathione. The enzyme catalyses (13S,14S)-epoxy-(4Z,7Z,9E,11E,16Z,19Z)-docosahexaenoate + glutathione = (13R)-S-glutathionyl-(14S)-hydroxy-(4Z,7Z,9E,11E,16Z,19Z)-docosahexaenoate. Its pathway is lipid metabolism; leukotriene C4 biosynthesis. Inhibited by MK886. Catalyzes the conjugation of leukotriene A4 with reduced glutathione (GSH) to form leukotriene C4 with high specificity. Can also catalyze the transfer of a glutathionyl group from glutathione (GSH) to 13(S),14(S)-epoxy-docosahexaenoic acid to form maresin conjugate in tissue regeneration 1 (MCTR1), a bioactive lipid mediator that possess potent anti-inflammatory and proresolving actions. The sequence is that of Leukotriene C4 synthase (Ltc4s) from Mus musculus (Mouse).